The primary structure comprises 339 residues: Lipopolysaccharide 1,2-glucosyltransferase (339 aa).

UDP-binding positions include 35–40 and 132–133; these read GIDENY and DA. Asp-132 and Asp-134 together coordinate Mg(2+). 2 consecutive short sequence motifs (DXD) follow at residues 132–134 and 219–221; these read DAD and DQD. Residue His-268 coordinates Mg(2+). Residue 268–274 coordinates UDP; the sequence is HYTGITK.

Belongs to the glycosyltransferase 8 family. The cofactor is Mg(2+).

It localises to the cell inner membrane. The enzyme catalyses UDP-glucose + [lipopolysaccharide] = UDP + D-glucosyl-[lipopolysaccharide].. The protein operates within bacterial outer membrane biogenesis; LPS core biosynthesis. Its function is as follows. Glucosyltransferase involved in the biosynthesis of the core oligosaccharide region of lipopolysaccharide (LPS). Catalyzes the addition of a glucose (glucose II) to the outer-core galactose I. Has a marked preference for its specific donor substrate, but it appears to have a relaxed specificity for alternate LPS acceptor residues, providing the overall size of the acceptor is conserved. This is Lipopolysaccharide 1,2-glucosyltransferase from Escherichia coli.